The chain runs to 968 residues: RNA polymerase-associated protein RapA (968 aa).

Residues 163 to 332 (EVGSRYAPRV…FARLRLLDPD (170 aa)) enclose the Helicase ATP-binding domain. 176-183 (DEVGLGKT) lines the ATP pocket. Residues 278–281 (DEAH) carry the DEAH box motif. Residues 491–655 (RVDWLIEFLK…EFADELINVL (165 aa)) form the Helicase C-terminal domain.

This sequence belongs to the SNF2/RAD54 helicase family. RapA subfamily. In terms of assembly, interacts with the RNAP. Has a higher affinity for the core RNAP than for the holoenzyme. Its ATPase activity is stimulated by binding to RNAP.

Functionally, transcription regulator that activates transcription by stimulating RNA polymerase (RNAP) recycling in case of stress conditions such as supercoiled DNA or high salt concentrations. Probably acts by releasing the RNAP, when it is trapped or immobilized on tightly supercoiled DNA. Does not activate transcription on linear DNA. Probably not involved in DNA repair. This Shewanella frigidimarina (strain NCIMB 400) protein is RNA polymerase-associated protein RapA.